The following is a 78-amino-acid chain: MSRKCQLTGKKANNAYAVSHSHRRTKKLQEANLQWKRVWWPEGNRWVRLRLSTKAIKTLETKGLSVMAKEAGINLNKI.

The protein belongs to the bacterial ribosomal protein bL28 family.

The protein is Large ribosomal subunit protein bL28 of Rippkaea orientalis (strain PCC 8801 / RF-1) (Cyanothece sp. (strain PCC 8801)).